Here is a 263-residue protein sequence, read N- to C-terminus: Formamidopyrimidine-DNA glycosylase (263 aa).

Catalysis depends on Pro2, which acts as the Schiff-base intermediate with DNA. Glu3 acts as the Proton donor in catalysis. The active-site Proton donor; for beta-elimination activity is Lys59. DNA contacts are provided by His93 and Arg111. An FPG-type zinc finger spans residues 229–263 (KVYGKNGSLCVRCNNVLIRERHAGRSTHYCPHCQK). Arg253 (proton donor; for delta-elimination activity) is an active-site residue.

This sequence belongs to the FPG family. In terms of assembly, monomer. The cofactor is Zn(2+).

The catalysed reaction is Hydrolysis of DNA containing ring-opened 7-methylguanine residues, releasing 2,6-diamino-4-hydroxy-5-(N-methyl)formamidopyrimidine.. It carries out the reaction 2'-deoxyribonucleotide-(2'-deoxyribose 5'-phosphate)-2'-deoxyribonucleotide-DNA = a 3'-end 2'-deoxyribonucleotide-(2,3-dehydro-2,3-deoxyribose 5'-phosphate)-DNA + a 5'-end 5'-phospho-2'-deoxyribonucleoside-DNA + H(+). In terms of biological role, involved in base excision repair of DNA damaged by oxidation or by mutagenic agents. Acts as a DNA glycosylase that recognizes and removes damaged bases. Has a preference for oxidized purines, such as 7,8-dihydro-8-oxoguanine (8-oxoG). Has AP (apurinic/apyrimidinic) lyase activity and introduces nicks in the DNA strand. Cleaves the DNA backbone by beta-delta elimination to generate a single-strand break at the site of the removed base with both 3'- and 5'-phosphates. The sequence is that of Formamidopyrimidine-DNA glycosylase from Carboxydothermus hydrogenoformans (strain ATCC BAA-161 / DSM 6008 / Z-2901).